A 208-amino-acid chain; its full sequence is Ribosomal RNA small subunit methyltransferase G (208 aa).

S-adenosyl-L-methionine is bound by residues G76, L81, 127–128 (VE), and R142.

Belongs to the methyltransferase superfamily. RNA methyltransferase RsmG family.

The protein resides in the cytoplasm. It catalyses the reaction guanosine(527) in 16S rRNA + S-adenosyl-L-methionine = N(7)-methylguanosine(527) in 16S rRNA + S-adenosyl-L-homocysteine. In terms of biological role, specifically methylates the N7 position of guanine in position 527 of 16S rRNA. This chain is Ribosomal RNA small subunit methyltransferase G, found in Legionella pneumophila (strain Lens).